Reading from the N-terminus, the 337-residue chain is uncharacterized protein (337 aa).

Positions 5–235 constitute an ABC transporter domain; it reads VEFDNVSRLY…PRTPFVAGFV (231 aa). Position 37-44 (37-44) interacts with ATP; that stretch reads GPSGSGKT.

The protein belongs to the ABC transporter superfamily.

Functionally, probably part of the ABC transporter complex YdcSTUV. Probably responsible for energy coupling to the transport system. This is an uncharacterized protein from Escherichia coli (strain K12).